The following is a 786-amino-acid chain: Endonuclease MutS2 (786 aa).

335–342 serves as a coordination point for ATP; it reads GPNTGGKT. Residues 711–786 form the Smr domain; it reads LDLRGERFEN…GLGVTVVELK (76 aa).

Belongs to the DNA mismatch repair MutS family. MutS2 subfamily. As to quaternary structure, homodimer. Binds to stalled ribosomes, contacting rRNA.

Its function is as follows. Endonuclease that is involved in the suppression of homologous recombination and thus may have a key role in the control of bacterial genetic diversity. Functionally, acts as a ribosome collision sensor, splitting the ribosome into its 2 subunits. Detects stalled/collided 70S ribosomes which it binds and splits by an ATP-hydrolysis driven conformational change. Acts upstream of the ribosome quality control system (RQC), a ribosome-associated complex that mediates the extraction of incompletely synthesized nascent chains from stalled ribosomes and their subsequent degradation. Probably generates substrates for RQC. The protein is Endonuclease MutS2 of Bacillus thuringiensis (strain Al Hakam).